The following is a 600-amino-acid chain: Probable translation initiation factor IF-2 (600 aa).

The region spanning 13 to 228 is the tr-type G domain; it reads LRTPIVAVLG…VLMGLAQRYM (216 aa). Positions 22 to 29 are G1; it reads GHVDHGKT. 22–29 contributes to the GTP binding site; it reads GHVDHGKT. The interval 47-51 is G2; that stretch reads AITQH. Positions 84–87 are G3; sequence DTPG. Residues 84–88 and 138–141 contribute to the GTP site; these read DTPGH and NKID. The tract at residues 138 to 141 is G4; it reads NKID. A disordered region spans residues 140-162; the sequence is IDTTPGWNPNPDAPVQGTYDDQS. The interval 206–208 is G5; it reads SAE.

The protein belongs to the TRAFAC class translation factor GTPase superfamily. Classic translation factor GTPase family. IF-2 subfamily.

In terms of biological role, function in general translation initiation by promoting the binding of the formylmethionine-tRNA to ribosomes. Seems to function along with eIF-2. This Halobacterium salinarum (strain ATCC 700922 / JCM 11081 / NRC-1) (Halobacterium halobium) protein is Probable translation initiation factor IF-2.